The sequence spans 510 residues: Beta-galactosidase (510 aa).

Glu-210 acts as the Proton donor in catalysis. The active-site Nucleophile is Glu-414.

The protein belongs to the glycosyl hydrolase 1 family.

It carries out the reaction Hydrolysis of terminal non-reducing beta-D-galactose residues in beta-D-galactosides.. In Pyrococcus woesei, this protein is Beta-galactosidase.